The primary structure comprises 449 residues: Neuraminidase (449 aa).

Over M1–K6 the chain is Intravirion. Residues I7–L29 traverse the membrane as a helical segment. An involved in apical transport and lipid raft association region spans residues G11–V33. The Virion surface portion of the chain corresponds to A30–L449. Residues N32, N48, and N66 are each glycosylated (N-linked (GlcNAc...) asparagine; by host). Positions H36 to S68 are hypervariable stalk region. The head of neuraminidase stretch occupies residues Q71–L449. 8 disulfides stabilise this stretch: C72–C397, C104–C109, C163–C210, C212–C217, C258–C271, C260–C269, C298–C317, and C401–C427. A substrate-binding site is contributed by R98. 2 N-linked (GlcNAc...) asparagine; by host glycosylation sites follow: N123 and N126. The Proton donor/acceptor role is filled by D131. R132 contacts substrate. Residues N180 and N214 are each glycosylated (N-linked (GlcNAc...) asparagine; by host). E256 to E257 is a substrate binding site. Substrate is bound at residue R272. Ca(2+) is bound by residues D273, G277, and D304. The disordered stretch occupies residues T305–K330. R351 lines the substrate pocket. The N-linked (GlcNAc...) asparagine; by host glycan is linked to N382. The Nucleophile role is filled by Y386.

Belongs to the glycosyl hydrolase 34 family. As to quaternary structure, homotetramer. Ca(2+) is required as a cofactor. Post-translationally, N-glycosylated.

It localises to the virion membrane. The protein resides in the host apical cell membrane. It catalyses the reaction Hydrolysis of alpha-(2-&gt;3)-, alpha-(2-&gt;6)-, alpha-(2-&gt;8)- glycosidic linkages of terminal sialic acid residues in oligosaccharides, glycoproteins, glycolipids, colominic acid and synthetic substrates.. Its activity is regulated as follows. Inhibited by the neuraminidase inhibitors zanamivir (Relenza) and oseltamivir (Tamiflu). These drugs interfere with the release of progeny virus from infected cells and are effective against all influenza strains. Resistance to neuraminidase inhibitors is quite rare. Functionally, catalyzes the removal of terminal sialic acid residues from viral and cellular glycoconjugates. Cleaves off the terminal sialic acids on the glycosylated HA during virus budding to facilitate virus release. Additionally helps virus spread through the circulation by further removing sialic acids from the cell surface. These cleavages prevent self-aggregation and ensure the efficient spread of the progeny virus from cell to cell. Otherwise, infection would be limited to one round of replication. Described as a receptor-destroying enzyme because it cleaves a terminal sialic acid from the cellular receptors. May facilitate viral invasion of the upper airways by cleaving the sialic acid moieties on the mucin of the airway epithelial cells. Likely to plays a role in the budding process through its association with lipid rafts during intracellular transport. May additionally display a raft-association independent effect on budding. Plays a role in the determination of host range restriction on replication and virulence. Sialidase activity in late endosome/lysosome traffic seems to enhance virus replication. The polypeptide is Neuraminidase (Aves).